The chain runs to 935 residues: Inter-alpha-trypsin inhibitor heavy chain H2 (935 aa).

The first 18 residues, 1–18, serve as a signal peptide directing secretion; sequence MKGLTCFLLCFLLSEAQG. Residues 19-53 constitute a propeptide that is removed on maturation; it reads FEIPTNGLSEFAEYGDLAELALGKFHVVPGNRRSQ. A VIT domain is found at 45-174; it reads VVPGNRRSQE…KVQFELHYQE (130 aa). The N-linked (GlcNAc...) asparagine glycan is linked to Asn-107. Glu-271 is subject to 4-carboxyglutamate. The VWFA domain maps to 297-457; it reads PKNILFVIDV…YDFLKRLSND (161 aa). A glycan (N-linked (GlcNAc...) asparagine) is linked at Asn-434. At Ser-455 the chain carries Phosphoserine. Asp-691 is modified (aspartate 1-(chondroitin 4-sulfate)-ester). Positions 692–935 are excised as a propeptide; sequence PHFIIYLPRS…PLLYSFLKRP (244 aa). Ser-875 carries the post-translational modification Phosphoserine.

Belongs to the ITIH family. In terms of assembly, I-alpha-I plasma protease inhibitors are assembled from one or two heavy chains (HC) and one light chain, bikunin. Inter-alpha-inhibitor (I-alpha-I) is composed of ITIH1/HC1, ITIH2/HC2 and bikunin. Heavy chains are linked to bikunin via chondroitin 4-sulfate esterified to the alpha-carboxyl of the C-terminal aspartate after propeptide cleavage. In terms of processing, phosphorylated by FAM20C in the extracellular medium.

The protein localises to the secreted. Functionally, may act as a carrier of hyaluronan in serum or as a binding protein between hyaluronan and other matrix protein, including those on cell surfaces in tissues to regulate the localization, synthesis and degradation of hyaluronan which are essential to cells undergoing biological processes. The polypeptide is Inter-alpha-trypsin inhibitor heavy chain H2 (ITIH2) (Sus scrofa (Pig)).